The primary structure comprises 320 residues: Probable carboxylesterase M8 (320 aa).

An Involved in the stabilization of the negatively charged intermediate by the formation of the oxyanion hole motif is present at residues 52–54 (HGG). Active-site residues include Ser-137 and His-296.

It belongs to the 'GDXG' lipolytic enzyme family.

It catalyses the reaction a carboxylic ester + H2O = an alcohol + a carboxylate + H(+). Its pathway is secondary metabolite biosynthesis. Probable carboxylesterase; part of the gene cluster that mediates the biosynthesis of squalestatin S1 (SQS1, also known as zaragozic acid A), a heavily oxidized fungal polyketide that offers potent cholesterol lowering activity by targeting squalene synthase (SS). SQS1 is composed of a 2,8-dioxobicyclic[3.2.1]octane-3,4,5-tricarboxyclic acid core that is connected to two lipophilic polyketide arms. These initial steps feature the priming of an unusual benzoic acid starter unit onto the highly reducing polyketide synthase pks2, followed by oxaloacetate extension and product release to generate a tricarboxylic acid containing product. The phenylalanine ammonia lyase (PAL) M7 and the acyl-CoA ligase M9 are involved in transforming phenylalanine into benzoyl-CoA. The citrate synthase-like protein R3 is involved in connecting the C-alpha-carbons of the hexaketide chain and oxaloacetate to afford the tricarboxylic acid unit. The potential hydrolytic enzymes, M8 and M10, are in close proximity to pks2 and may participate in product release. On the other side, the tetraketide arm is synthesized by a the squalestatin tetraketide synthase pks1 and enzymatically esterified to the core in the last biosynthetic step, by the acetyltransferase M4. The biosynthesis of the tetraketide must involve 3 rounds of chain extension. After the first and second rounds methyl-transfer occurs, and in all rounds of extension the ketoreductase and dehydratase are active. The enoyl reductase and C-MeT of pks1 are not active in the final round of extension. The acetyltransferase M4 appears to have a broad substrate selectivity for its acyl CoA substrate, allowing the in vitro synthesis of novel squalestatins. The biosynthesis of SQS1 requires several oxidative steps likely performed by oxidoreductases M1, R1 and R2. Finally, in support of the identification of the cluster as being responsible for SQS1 production, the cluster contains a gene encoding a putative squalene synthase (SS) R6, suggesting a likely mechanism for self-resistance. This Phoma sp. (strain ATCC 20986 / MF5453) protein is Probable carboxylesterase M8.